The primary structure comprises 172 residues: Spermidine/spermine N(1)-acetyltransferase (172 aa).

The N-acetyltransferase domain occupies 3–172; that stretch reads VKMKKCSRED…TDLIMAKTLI (170 aa). Residues 96–98, 105–109, and 135–137 contribute to the acetyl-CoA site; these read IYI, HGLGK, and NEN. Tyr142 (proton donor) is an active-site residue. Position 144 (Lys144) interacts with acetyl-CoA.

This sequence belongs to the acetyltransferase family. In terms of assembly, monomer.

It carries out the reaction an alkane-alpha,omega-diamine + acetyl-CoA = an N-acetylalkane-alpha,omega-diamine + CoA + H(+). Involved in the protection against polyamine toxicity by regulating their concentration. Could also be involved in the negative control of sporulation as well as production of degradative enzymes such as alpha-amylase, levansucrase and alkaline phosphatase. Catalyzes the transfer of an acetyl group from acetyl coenzyme A (AcCoA) to an acceptor substrate and releases both CoA and the acetylated product. It possesses N1-acetyltransferase activity toward polyamine substrates including spermidine, spermine, aminopropylcadaverine, norspermidine, homospermidine, N(8)-acetylspermidine, diaminopropane and agmatine. This is Spermidine/spermine N(1)-acetyltransferase from Bacillus subtilis (strain 168).